We begin with the raw amino-acid sequence, 65 residues long: SPbeta prophage-derived uncharacterized protein YopU (65 aa).

In Bacillus subtilis (strain 168), this protein is SPbeta prophage-derived uncharacterized protein YopU (yopU).